The following is a 579-amino-acid chain: V-type ATP synthase alpha chain (579 aa).

227 to 234 provides a ligand contact to ATP; the sequence is GGFGTGKT.

This sequence belongs to the ATPase alpha/beta chains family.

The enzyme catalyses ATP + H2O + 4 H(+)(in) = ADP + phosphate + 5 H(+)(out). In terms of biological role, produces ATP from ADP in the presence of a proton gradient across the membrane. The V-type alpha chain is a catalytic subunit. The chain is V-type ATP synthase alpha chain from Anaeromyxobacter dehalogenans (strain 2CP-1 / ATCC BAA-258).